Consider the following 236-residue polypeptide: Purine nucleoside phosphorylase DeoD-type 2 (236 aa).

An a purine D-ribonucleoside-binding site is contributed by His5. Residues Gly21, Arg25, Arg44, and 88-91 (RIGS) each bind phosphate. A purine D-ribonucleoside contacts are provided by residues 180-182 (DME) and 204-205 (SD). The active-site Proton donor is Asp205.

This sequence belongs to the PNP/UDP phosphorylase family. In terms of assembly, homohexamer; trimer of homodimers.

It carries out the reaction a purine D-ribonucleoside + phosphate = a purine nucleobase + alpha-D-ribose 1-phosphate. It catalyses the reaction a purine 2'-deoxy-D-ribonucleoside + phosphate = a purine nucleobase + 2-deoxy-alpha-D-ribose 1-phosphate. Its function is as follows. Catalyzes the reversible phosphorolytic breakdown of the N-glycosidic bond in the beta-(deoxy)ribonucleoside molecules, with the formation of the corresponding free purine bases and pentose-1-phosphate. The polypeptide is Purine nucleoside phosphorylase DeoD-type 2 (Vibrio cholerae serotype O1 (strain ATCC 39315 / El Tor Inaba N16961)).